We begin with the raw amino-acid sequence, 386 residues long: Mannitol-1-phosphate 5-dehydrogenase (386 aa).

NAD(+) is bound at residue 3-14 (AVHFGAGNIGRG).

Belongs to the mannitol dehydrogenase family.

The enzyme catalyses D-mannitol 1-phosphate + NAD(+) = beta-D-fructose 6-phosphate + NADH + H(+). This Brevibacillus brevis (strain 47 / JCM 6285 / NBRC 100599) protein is Mannitol-1-phosphate 5-dehydrogenase.